A 146-amino-acid polypeptide reads, in one-letter code: Envelope protein OPG155 (146 aa).

A helical; Signal-anchor for type III membrane protein membrane pass occupies residues 1-21 (MNSLSIFFIVVATAAVCLLFI). Residues 22 to 146 (QGYSIYENYG…AECQFLKSVL (125 aa)) are Intravirion-facing.

The protein belongs to the orthopoxvirus OPG155 protein family. In terms of assembly, part of a stable entry-fusion complex (EFC) which is at least composed of proteins OPG143, OPG147, OPG155, OPG086, OPG094, OPG107, OPG104, and OPG099. Formation of the viral membrane is necessary for the assembly of the complex. Interacts directly with protein OPG107. Contains two intramolecular disulfide bonds. They are created by the viral disulfide bond formation pathway, a poxvirus-specific pathway that operates on the cytoplasmic side of the MV membranes.

It localises to the virion membrane. Envelope protein required for virus entry into host cell and for cell-cell fusion (syncytium formation). This chain is Envelope protein OPG155 (OPG155), found in Vaccinia virus (strain Ankara) (VACV).